The following is a 198-amino-acid chain: Ras-related protein Rab-34, isoform NARR (198 aa).

Tandem repeats lie at residues 7–15, 16–24, 25–33, 34–42, 43–51, 52–60, 61–69, 70–78, 79–87, 88–96, 97–105, 106–114, and 115–123. The interval 7–125 is 13 x 9 AA approximate tandem-repeats of P-R-V-I-V-G-(S/T)-P-R; the sequence is PRDDVGSPRP…RPRVIVGSPR (119 aa). S13 carries the post-translational modification Phosphoserine. A disordered region spans residues 37–64; the sequence is IVGSARARPPPDGTPRPQLAAEESPRPR. T69 carries the phosphothreonine modification. 3 positions are modified to phosphoserine: S78, S87, and S96. A compositionally biased stretch (low complexity) spans 94–121; the sequence is VASPRPRTPVGSPWPRVVVGTPRPRVIV. The tract at residues 94 to 198 is disordered; it reads VASPRPRTPV…GAPDRHRGQI (105 aa). S123 is modified (phosphoserine). Basic and acidic residues predominate over residues 145 to 157; the sequence is RRQDEHSGTRAEG. Positions 161 to 178 are enriched in low complexity; sequence GGAAPVPEEGGRFARAQR.

As to quaternary structure, may interact with EIF5A and ERF1. Post-translationally, phosphorylated during M-phase.

It localises to the nucleus. It is found in the nucleolus. This is Ras-related protein Rab-34, isoform NARR (RAB34) from Homo sapiens (Human).